Here is a 232-residue protein sequence, read N- to C-terminus: Phosphatidylserine decarboxylase proenzyme (232 aa).

The Schiff-base intermediate with substrate; via pyruvic acid role is filled by Ser190. At Ser190 the chain carries Pyruvic acid (Ser); by autocatalysis.

This sequence belongs to the phosphatidylserine decarboxylase family. PSD-A subfamily. In terms of assembly, heterodimer of a large membrane-associated beta subunit and a small pyruvoyl-containing alpha subunit. Requires pyruvate as cofactor. Post-translationally, is synthesized initially as an inactive proenzyme. Formation of the active enzyme involves a self-maturation process in which the active site pyruvoyl group is generated from an internal serine residue via an autocatalytic post-translational modification. Two non-identical subunits are generated from the proenzyme in this reaction, and the pyruvate is formed at the N-terminus of the alpha chain, which is derived from the carboxyl end of the proenzyme. The post-translation cleavage follows an unusual pathway, termed non-hydrolytic serinolysis, in which the side chain hydroxyl group of the serine supplies its oxygen atom to form the C-terminus of the beta chain, while the remainder of the serine residue undergoes an oxidative deamination to produce ammonia and the pyruvoyl prosthetic group on the alpha chain.

It is found in the cell membrane. It catalyses the reaction a 1,2-diacyl-sn-glycero-3-phospho-L-serine + H(+) = a 1,2-diacyl-sn-glycero-3-phosphoethanolamine + CO2. It functions in the pathway phospholipid metabolism; phosphatidylethanolamine biosynthesis; phosphatidylethanolamine from CDP-diacylglycerol: step 2/2. Functionally, catalyzes the formation of phosphatidylethanolamine (PtdEtn) from phosphatidylserine (PtdSer). This is Phosphatidylserine decarboxylase proenzyme from Agrobacterium fabrum (strain C58 / ATCC 33970) (Agrobacterium tumefaciens (strain C58)).